Reading from the N-terminus, the 117-residue chain is Cell division protein FtsL (117 aa).

Over methionine 1–lysine 35 the chain is Cytoplasmic. A helical transmembrane segment spans residues valine 36–alanine 56. Residues tyrosine 57–glutamate 117 are Extracellular-facing.

The protein belongs to the FtsL family. Monomer. Interacts with DivIB and DivIC. Interaction with DivIC stabilizes FtsL against RasP cleavage. Cleaved by RasP. Cleavage is important for turnover and function of FtsL.

It is found in the cell membrane. In terms of biological role, essential cell division protein that may play a structural role. Probably involved in the regulation of the timing of cell division. Also required for sporulation. This chain is Cell division protein FtsL, found in Bacillus subtilis (strain 168).